The sequence spans 410 residues: D-amino acid dehydrogenase (410 aa).

FAD is bound at residue 9 to 14 (GGGIVG).

It belongs to the DadA oxidoreductase family. FAD serves as cofactor.

It localises to the cell inner membrane. It catalyses the reaction a D-alpha-amino acid + a quinone + H2O = a 2-oxocarboxylate + a quinol + NH4(+). In terms of biological role, catalyzes the oxidative deamination of D-amino acids. Has broad substrate specificity; is mostly active on D-proline, and to a lesser extent, on several other D-amino acids such as D-alanine, D-phenylalanine and D-serine. Mediates electron transport from D-proline to coenzyme Q1 in vitro, and is involved in the electron transport chain from D-proline to the c-type cytochrome in vivo. The protein is D-amino acid dehydrogenase of Helicobacter pylori (strain J99 / ATCC 700824) (Campylobacter pylori J99).